Reading from the N-terminus, the 269-residue chain is RBPJ-interacting and tubulin-associated protein 1 (269 aa).

Residues 5 to 17 carry the Nuclear export signal motif; it reads VELAVSGIQTLPL. Disordered regions lie at residues 37 to 101 and 141 to 269; these read SLFG…NKYR and FWTP…PPWK. The span at 62–77 shows a compositional bias: polar residues; the sequence is RTSGVGTGTSRASGAN. Positions 79-93 are enriched in low complexity; sequence SCETTSSSGSTPTLT. The Nuclear localization signal motif lies at 92 to 108; that stretch reads LTPRKKNKYRLISHTPS. The interval 128-156 is interaction with RBPJ/RBPSUH; sequence WMAKGDAAKLHSLFWTPPATPRGSHSPRP. The interaction with tubulin stretch occupies residues 156 to 269; sequence PRETPLRAIH…ATQKPKPPWK (114 aa).

Belongs to the RITA family. As to quaternary structure, interacts with RBPJ/RBPSUH.

Its subcellular location is the cytoplasm. The protein localises to the nucleus. It is found in the cytoskeleton. The protein resides in the microtubule organizing center. It localises to the centrosome. Functionally, tubulin-binding protein that acts as a negative regulator of Notch signaling pathway. Shuttles between the cytoplasm and the nucleus and mediates the nuclear export of RBPJ/RBPSUH, thereby preventing the interaction between RBPJ/RBPSUH and NICD product of Notch proteins (Notch intracellular domain), leading to down-regulate Notch-mediated transcription. May play a role in neurogenesis. This chain is RBPJ-interacting and tubulin-associated protein 1 (RITA1), found in Ailuropoda melanoleuca (Giant panda).